We begin with the raw amino-acid sequence, 151 residues long: Ribosome maturation factor RimP (151 aa).

Belongs to the RimP family.

It localises to the cytoplasm. In terms of biological role, required for maturation of 30S ribosomal subunits. The protein is Ribosome maturation factor RimP of Alcanivorax borkumensis (strain ATCC 700651 / DSM 11573 / NCIMB 13689 / SK2).